The primary structure comprises 428 residues: Adenylosuccinate synthetase (428 aa).

GTP contacts are provided by residues 12 to 18 and 40 to 42; these read GDEGKGK and GHT. Residue Asp13 is the Proton acceptor of the active site. Asp13 and Gly40 together coordinate Mg(2+). Residues 13–16, 38–41, Thr128, Arg142, Gln223, Thr238, and Arg302 contribute to the IMP site; these read DEGK and NAGH. His41 acts as the Proton donor in catalysis. 298 to 304 serves as a coordination point for substrate; the sequence is VTTGRPR. GTP-binding positions include Arg304, 330–332, and 413–415; these read KLD and GVG.

Belongs to the adenylosuccinate synthetase family. As to quaternary structure, homodimer. The cofactor is Mg(2+).

It localises to the cytoplasm. It carries out the reaction IMP + L-aspartate + GTP = N(6)-(1,2-dicarboxyethyl)-AMP + GDP + phosphate + 2 H(+). Its pathway is purine metabolism; AMP biosynthesis via de novo pathway; AMP from IMP: step 1/2. Its function is as follows. Plays an important role in the de novo pathway of purine nucleotide biosynthesis. Catalyzes the first committed step in the biosynthesis of AMP from IMP. In Acidothermus cellulolyticus (strain ATCC 43068 / DSM 8971 / 11B), this protein is Adenylosuccinate synthetase.